Reading from the N-terminus, the 122-residue chain is Large ribosomal subunit protein uL22 (122 aa).

This sequence belongs to the universal ribosomal protein uL22 family. Part of the 50S ribosomal subunit.

Functionally, this protein binds specifically to 23S rRNA; its binding is stimulated by other ribosomal proteins, e.g. L4, L17, and L20. It is important during the early stages of 50S assembly. It makes multiple contacts with different domains of the 23S rRNA in the assembled 50S subunit and ribosome. In terms of biological role, the globular domain of the protein is located near the polypeptide exit tunnel on the outside of the subunit, while an extended beta-hairpin is found that lines the wall of the exit tunnel in the center of the 70S ribosome. This is Large ribosomal subunit protein uL22 from Prochlorococcus marinus (strain MIT 9303).